We begin with the raw amino-acid sequence, 98 residues long: Putative pterin-4-alpha-carbinolamine dehydratase (98 aa).

Belongs to the pterin-4-alpha-carbinolamine dehydratase family.

It catalyses the reaction (4aS,6R)-4a-hydroxy-L-erythro-5,6,7,8-tetrahydrobiopterin = (6R)-L-erythro-6,7-dihydrobiopterin + H2O. In Jannaschia sp. (strain CCS1), this protein is Putative pterin-4-alpha-carbinolamine dehydratase.